A 1476-amino-acid chain; its full sequence is Cystic fibrosis transmembrane conductance regulator (1476 aa).

Topologically, residues 1-77 (MQKSPLEKAS…QLIHALRRCF (77 aa)) are cytoplasmic. The chain crosses the membrane as a helical span at residues 78–98 (FWRFLFYGILLYLGEVTKAVQ). Residues 81–365 (FLFYGILLYL…TAVQIWYDSF (285 aa)) form the ABC transmembrane type-1 1 domain. Residues 99–122 (PVLLGRIIASYDPENKVERSIAIY) are Extracellular-facing. Residues 123-146 (LGIGLCLLFIVRTLLLHPAIFGLH) form a helical membrane-spanning segment. Residues 147–195 (RIGMQMRTAMFSLIYKKTLKLSSRVLDKISIGQLVSLLSNNLNKFDEGL) are Cytoplasmic-facing. A helical membrane pass occupies residues 196 to 216 (ALAHFIWIAPLQVTLLMGLLW). Over 217–222 (DLLQFS) the chain is Extracellular. The helical transmembrane segment at 223–243 (AFCGLGLLIILVIFQAILGKM) threads the bilayer. The Cytoplasmic portion of the chain corresponds to 244-298 (MVKYRDQRAAKINERLVITSEIIDNIYSVKAYCWESAMEKMIENLREVELKMTRK). Residues 299 to 319 (AAYMRFFTSSAFFFSGFFVVF) form a helical membrane-spanning segment. Over 320 to 339 (LSVLPYTVINGIVLRKIFTT) the chain is Extracellular. A helical membrane pass occupies residues 340 to 358 (ISFCIVLRMSVTRQFPTAV). Residues 359–853 (QIWYDSFGMI…YLRYFTLHKG (495 aa)) lie on the Cytoplasmic side of the membrane. Residues Trp-401, 458-465 (GSTGSGKT), and Gln-493 contribute to the ATP site. In terms of domain architecture, ABC transporter 1 spans 423–646 (SDENNVSFSH…RPDFSSKLMG (224 aa)). The S-palmitoyl cysteine moiety is linked to residue Cys-524. A phosphoserine mark is found at Ser-549 and Ser-660. The interval 654-826 (TEERRSSILT…EEINEEDLKE (173 aa)) is disordered R region. A Phosphoserine; by PKA modification is found at Ser-670. 3 positions are modified to phosphoserine: Ser-684, Ser-698, and Ser-710. Phosphothreonine is present on Thr-715. Residues Ser-732, Ser-763, Ser-785, Ser-790, and Ser-808 each carry the phosphoserine modification. Residues 854 to 874 (LLLVLIWCVLVFLVEVAASLF) form a helical membrane-spanning segment. One can recognise an ABC transmembrane type-1 2 domain in the interval 854–1153 (LLLVLIWCVL…SSIDTDSLMR (300 aa)). Over 875 to 913 (VLWLLKNNPVNSGNNGTKISNSSYVVIITSTSFYYIFYI) the chain is Extracellular. 2 N-linked (GlcNAc...) asparagine glycosylation sites follow: Asn-889 and Asn-895. Residues 914–934 (YVGVADTLLALSLFRGLPLVH) traverse the membrane as a discontinuously helical segment. Over 935 to 985 (TLITASKILHRKMLHSILHAPMSTISKLKAGGILNRFSKDIAILDDFLPLT) the chain is Cytoplasmic. A helical membrane pass occupies residues 986–1006 (IFDFIQLVFIVIGAIIVVSAL). The Extracellular portion of the chain corresponds to 1007-1008 (QP). A helical membrane pass occupies residues 1009–1029 (YIFLATVPGLVVFILLRAYFL). Residues 1030–1090 (HTAQQLKQLE…TANWFMYLAT (61 aa)) lie on the Cytoplasmic side of the membrane. The chain crosses the membrane as a helical span at residues 1091–1111 (LRWFQMRIDMIFVLFFIVVTF). At 1112-1125 (ISILTTGEGEGTAG) the chain is on the extracellular side. Residues 1126–1146 (IILTLAMNIMSTLQWAVNSSI) traverse the membrane as a helical segment. Topologically, residues 1147–1476 (DTDSLMRSVS…TEEEVQETRL (330 aa)) are cytoplasmic. The ABC transporter 2 domain occupies 1208–1439 (VKDLTVKYMD…KSIFQQAISS (232 aa)). ATP-binding positions include Tyr-1215 and 1240-1247 (GRTGSGKS). The interval 1382–1476 (RVLKQAFAGC…TEEEVQETRL (95 aa)) is interaction with GORASP2. A lipid anchor (S-palmitoyl cysteine) is attached at Cys-1391. Ser-1440 and Ser-1452 each carry phosphoserine. A disordered region spans residues 1446–1476 (FQGRHSSKHKPRTQITALKEETEEEVQETRL). The segment covering 1466-1476 (ETEEEVQETRL) has biased composition (acidic residues). Residues 1474-1476 (TRL) carry the PDZ-binding motif.

The protein belongs to the ABC transporter superfamily. ABCC family. CFTR transporter (TC 3.A.1.202) subfamily. In terms of assembly, monomer; does not require oligomerization for channel activity. May form oligomers in the membrane. Interacts with SLC26A3, SLC26A6 and NHERF1. Interacts with SHANK2. Interacts with MYO6. Interacts (via C-terminus) with GOPC (via PDZ domain); this promotes CFTR internalization and thereby decreases channel activity. Interacts with SLC4A7 through NHERF1. Found in a complex with MYO5B and RAB11A. Interacts with ANO1. Interacts with SLC26A8. Interacts with AHCYL1; the interaction increases CFTR activity. Interacts with CSE1L. The core-glycosylated form interacts with GORASP2 (via PDZ GRASP-type 1 domain) in respone to ER stress. Interacts with MARCHF2; the interaction leads to CFTR ubiqtuitination and degradation. Interacts with ADGRG2. N-glycosylated. In terms of processing, phosphorylated; cAMP treatment promotes phosphorylation and activates the channel. Dephosphorylation decreases the ATPase activity (in vitro). Phosphorylation at PKA sites activates the channel. Phosphorylation at PKC sites enhances the response to phosphorylation by PKA. Phosphorylated by AMPK; this inhibits channel activity. Post-translationally, ubiquitinated, leading to its degradation in the lysosome. Deubiquitination by USP10 in early endosomes enhances its endocytic recycling to the cell membrane. Ubiquitinated by RNF185 during ER stress. Ubiquitinated by MARCHF2. As to expression, expressed in the epididymis (at protein level). In the initial segment of the epididymis, detected on both the luminal and basolateral sides of the ducts where it is expressed in the duct columnar cells as well as in the interstitial smooth muscle cells. Expressed in sperm in the caput. In the cauda, detected along the luminal border but not continuously and is also expressed on the basolateral surface. Within the caudal lumen, detected on sperm. Isoform 1: Expressed in a variety of epithelial tissues including colon, kidney, lung, small intestine, pancreatic duct and testis. Isoform 2: Expressed only in testis. Isoform 3: Expressed only in testis.

It localises to the apical cell membrane. The protein localises to the early endosome membrane. The protein resides in the cell membrane. Its subcellular location is the recycling endosome membrane. It is found in the endoplasmic reticulum membrane. It localises to the nucleus. The enzyme catalyses ATP + H2O + closed Cl(-) channel = ADP + phosphate + open Cl(-) channel.. The catalysed reaction is chloride(in) = chloride(out). It carries out the reaction hydrogencarbonate(in) = hydrogencarbonate(out). It catalyses the reaction ATP + H2O = ADP + phosphate + H(+). In terms of biological role, epithelial ion channel that plays an important role in the regulation of epithelial ion and water transport and fluid homeostasis. Mediates the transport of chloride ions across the cell membrane. Possesses an intrinsic ATPase activity and utilizes ATP to gate its channel; the passive flow of anions through the channel is gated by cycles of ATP binding and hydrolysis by the ATP-binding domains. The ion channel is also permeable to HCO(3)(-); selectivity depends on the extracellular chloride concentration. Exerts its function also by modulating the activity of other ion channels and transporters. Contributes to the regulation of the pH and the ion content of the epithelial fluid layer. Modulates the activity of the epithelial sodium channel (ENaC) complex, in part by regulating the cell surface expression of the ENaC complex. May regulate bicarbonate secretion and salvage in epithelial cells by regulating the transporter SLC4A7. Can inhibit the chloride channel activity of ANO1. Plays a role in the chloride and bicarbonate homeostasis during sperm epididymal maturation and capacitation. The protein is Cystic fibrosis transmembrane conductance regulator of Mus musculus (Mouse).